Reading from the N-terminus, the 498-residue chain is U4/U6 small nuclear ribonucleoprotein Prp31 (498 aa).

Coiled coils occupy residues 84 to 119 (EAAP…KYSK) and 180 to 214 (DEEL…MSFI). Positions 214 to 332 (IAPNLSIIVG…IERKFDKWQE (119 aa)) constitute a Nop domain. The disordered stretch occupies residues 333–356 (PPPVKQVKPLPAPLDGQRKKRGGR). The Nuclear localization signal (NLS) signature appears at 350–363 (RKKRGGRRYRKMKE).

This sequence belongs to the PRP31 family. In terms of assembly, identified in the spliceosome B complex. Component of the U4/U6-U5 tri-snRNP complex. Component of some MLL1/MLL complex.

Its subcellular location is the nucleus. The protein localises to the nucleus speckle. It localises to the cajal body. Involved in pre-mRNA splicing as component of the spliceosome. Required for the assembly of the U4/U5/U6 tri-snRNP complex, one of the building blocks of the spliceosome. The polypeptide is U4/U6 small nuclear ribonucleoprotein Prp31 (prpf31) (Xenopus tropicalis (Western clawed frog)).